Here is a 269-residue protein sequence, read N- to C-terminus: Thiazole synthase (269 aa).

Lys-109 acts as the Schiff-base intermediate with DXP in catalysis. 1-deoxy-D-xylulose 5-phosphate contacts are provided by residues Gly-170, 196–197, and 218–219; these read AG and NT.

The protein belongs to the ThiG family. As to quaternary structure, homotetramer. Forms heterodimers with either ThiH or ThiS.

The protein resides in the plastid. It localises to the chloroplast. It catalyses the reaction [ThiS sulfur-carrier protein]-C-terminal-Gly-aminoethanethioate + 2-iminoacetate + 1-deoxy-D-xylulose 5-phosphate = [ThiS sulfur-carrier protein]-C-terminal Gly-Gly + 2-[(2R,5Z)-2-carboxy-4-methylthiazol-5(2H)-ylidene]ethyl phosphate + 2 H2O + H(+). The protein operates within cofactor biosynthesis; thiamine diphosphate biosynthesis. Its function is as follows. Catalyzes the rearrangement of 1-deoxy-D-xylulose 5-phosphate (DXP) to produce the thiazole phosphate moiety of thiamine. Sulfur is provided by the thiocarboxylate moiety of the carrier protein ThiS. In vitro, sulfur can be provided by H(2)S. This is Thiazole synthase from Thalassiosira pseudonana (Marine diatom).